Reading from the N-terminus, the 253-residue chain is Imidazole glycerol phosphate synthase subunit HisF (253 aa).

Active-site residues include Asp12 and Asp131.

It belongs to the HisA/HisF family. As to quaternary structure, heterodimer of HisH and HisF.

Its subcellular location is the cytoplasm. It catalyses the reaction 5-[(5-phospho-1-deoxy-D-ribulos-1-ylimino)methylamino]-1-(5-phospho-beta-D-ribosyl)imidazole-4-carboxamide + L-glutamine = D-erythro-1-(imidazol-4-yl)glycerol 3-phosphate + 5-amino-1-(5-phospho-beta-D-ribosyl)imidazole-4-carboxamide + L-glutamate + H(+). It functions in the pathway amino-acid biosynthesis; L-histidine biosynthesis; L-histidine from 5-phospho-alpha-D-ribose 1-diphosphate: step 5/9. Functionally, IGPS catalyzes the conversion of PRFAR and glutamine to IGP, AICAR and glutamate. The HisF subunit catalyzes the cyclization activity that produces IGP and AICAR from PRFAR using the ammonia provided by the HisH subunit. This Corynebacterium urealyticum (strain ATCC 43042 / DSM 7109) protein is Imidazole glycerol phosphate synthase subunit HisF.